The primary structure comprises 780 residues: MESIKVCMNALCGAASTSGEWKKGWPMRSGDLASLCDKCGCAYEQSIFCEVFHAKESGWRECNSCDKRLHCGCIASRFMMELLENGGVTCISCAKKSGLISMNVSHESNGKDFPSFASAEHVGSVLERTNLKHLLHFQRIDPTHSSLQMKQEESLLPSSLDALRHKTERKELSAQPNLSISLGPTLMTSPFHDAAVDDRSKTNSIFQLAPRSRQLLPKPANSAPIAAGMEPSGSLVSQIHVARPPPEGRGKTQLLPRYWPRITDQELLQLSGQYPHLSNSKIIPLFEKVLSASDAGRIGRLVLPKACAEAYFPPISLPEGLPLKIQDIKGKEWVFQFRFWPNNNSRMYVLEGVTPCIQSMQLQAGDTVTFSRTEPEGKLVMGYRKATNSTATQMFKGSSEPNLNMFSNSLNPGCGDINWSKLEKSEDMAKDNLFLQSSLTSARKRVRNIGTKSKRLLIDSVDVLELKITWEEAQELLRPPQSTKPSIFTLENQDFEEYDEPPVFGKRTLFVSRQTGEQEQWVQCDACGKWRQLPVDILLPPKWSCSDNLLDPGRSSCSAPDELSPREQDTLVRQSKEFKRRRLASSNEKLNQSQDASALNSLGNAGITTTGEQGEITVAATTKHPRHRAGCSCIVCSQPPSGKGKHKPSCTCTVCEAVKRRFRTLMLRKRNKGEAGQASQQAQSQSECRDETEVESIPAVELAAGENIDLNSDPGASRVSMMRLLQAAAFPLEAYLKQKAISNTAGEQQSSDMVSTEHGSSSAAQETEKDTTNGAHDPVN.

The segment at residues 286–387 (FEKVLSASDA…KLVMGYRKAT (102 aa)) is a DNA-binding region (TF-B3). The CW-type zinc-finger motif lies at 515 to 565 (TGEQEQWVQCDACGKWRQLPVDILLPPKWSCSDNLLDPGRSSCSAPDELSP). Zn(2+)-binding residues include C524, C527, C545, and C557. 3 disordered regions span residues 577 to 608 (EFKR…AGIT), 669 to 695 (KRNK…TEVE), and 743 to 780 (NTAG…DPVN). Positions 584–603 (ASSNEKLNQSQDASALNSLG) are enriched in polar residues. A compositionally biased stretch (low complexity) spans 674–686 (EAGQASQQAQSQS). Over residues 743 to 765 (NTAGEQQSSDMVSTEHGSSSAAQ) the composition is skewed to polar residues.

It is found in the nucleus. In terms of biological role, transcriptional repressor of gene expression involved in embryonic pathways, such as LEC1, ABI3, and FUS3. Repressor of the sugar-inducible genes involved in the seed maturation program in seedlings. Plays an essential role in regulating the transition from seed maturation to seedling growth. Functionally redundant with VAL1/HSI2. This is B3 domain-containing transcription repressor VAL2 (VAL2) from Arabidopsis thaliana (Mouse-ear cress).